The following is a 421-amino-acid chain: Proton/sodium-glutamate symport protein (421 aa).

Topologically, residues 1 to 3 are cytoplasmic; the sequence is MRK. A helical transmembrane segment spans residues 4-24; the sequence is IGLAWQIFIGLILGIIVGAIF. Residues 25–43 lie on the Extracellular side of the membrane; it reads YGNPKVATYLQPIGDIFLR. A helical membrane pass occupies residues 44–64; sequence LIKMIVIPIVISSLVVGVASV. The Cytoplasmic portion of the chain corresponds to 65-77; sequence GDLKKLGKLGGKT. Residues 78–98 traverse the membrane as a helical segment; that stretch reads IIYFEIITTIAIVVGLLAANI. The Extracellular portion of the chain corresponds to 99–148; sequence FQPGTGVNMKSLEKTDIQSYVDTTNEVQHHSMVETFVNIVPKNIFESLTK. Residues 149–169 traverse the membrane as a helical segment; sequence GDMLPIIFFSVMFGLGVAAIG. The Cytoplasmic segment spans residues 170–198; that stretch reads EKGKPVLQFFQGTAEAMFYVTNQIMKFAP. Residues 199-219 traverse the membrane as a helical segment; it reads FGVFALIGVTVSKFGVESLIP. Residues 220-222 lie on the Extracellular side of the membrane; sequence LSK. Residues 223 to 243 form a helical membrane-spanning segment; that stretch reads LVIVVYATMVFFIFVVLGGVA. Position 244 (Lys244) is a topological domain, cytoplasmic. The chain crosses the membrane as a helical span at residues 245–265; sequence LFGINIFHIIKILKDELILAY. Topologically, residues 266–306 are extracellular; that stretch reads STASSETVLPKIMEKMENFGCPKAITSFVIPTGYSFNLDGS. A helical transmembrane segment spans residues 307–327; the sequence is TLYQALAAIFIAQLYGIDMPI. Topologically, residues 328-330 are cytoplasmic; the sequence is SQQ. Helical transmembrane passes span 331–351 and 352–372; these read ISLLLVLMVTSKGIAGVPGVS and FVVLLATLGTVGIPIEGLAFI. Topologically, residues 373 to 421 are cytoplasmic; the sequence is AGIDRILDMARTAVNVIGNSLAAIIMSKWEGQYNEEKGKQYIAQLQQSA.

The protein belongs to the dicarboxylate/amino acid:cation symporter (DAACS) (TC 2.A.23) family. Homotrimer.

The protein localises to the cell membrane. This carrier protein is part of the Na(+)-dependent, binding-protein-independent glutamate-aspartate transport system. The sequence is that of Proton/sodium-glutamate symport protein (gltT) from Geobacillus stearothermophilus (Bacillus stearothermophilus).